Reading from the N-terminus, the 456-residue chain is Methylenetetrahydrofolate--tRNA-(uracil-5-)-methyltransferase TrmFO (456 aa).

Residue 11-16 participates in FAD binding; sequence GAGLAG.

Belongs to the MnmG family. TrmFO subfamily. It depends on FAD as a cofactor.

The protein resides in the cytoplasm. The enzyme catalyses uridine(54) in tRNA + (6R)-5,10-methylene-5,6,7,8-tetrahydrofolate + NADH + H(+) = 5-methyluridine(54) in tRNA + (6S)-5,6,7,8-tetrahydrofolate + NAD(+). The catalysed reaction is uridine(54) in tRNA + (6R)-5,10-methylene-5,6,7,8-tetrahydrofolate + NADPH + H(+) = 5-methyluridine(54) in tRNA + (6S)-5,6,7,8-tetrahydrofolate + NADP(+). In terms of biological role, catalyzes the folate-dependent formation of 5-methyl-uridine at position 54 (M-5-U54) in all tRNAs. The polypeptide is Methylenetetrahydrofolate--tRNA-(uracil-5-)-methyltransferase TrmFO (Synechococcus sp. (strain CC9605)).